Reading from the N-terminus, the 59-residue chain is Large ribosomal subunit protein bL32 (59 aa).

Positions 1–34 are disordered; sequence MAVQKSKVTRSRRGQRRSHDALTGPTLSVDKTTG. Positions 7–16 are enriched in basic residues; that stretch reads KVTRSRRGQR.

It belongs to the bacterial ribosomal protein bL32 family.

The sequence is that of Large ribosomal subunit protein bL32 from Marinomonas sp. (strain MWYL1).